The chain runs to 160 residues: Siroheme decarboxylase NirH subunit (160 aa).

This sequence belongs to the Ahb/Nir family. As to quaternary structure, forms a complex composed of NirDL, NirG and NirH. All proteins are required for the total conversion of siroheme to didecarboxysiroheme.

It catalyses the reaction siroheme + 2 H(+) = 12,18-didecarboxysiroheme + 2 CO2. Its pathway is porphyrin-containing compound metabolism. In terms of biological role, involved in heme d1 biosynthesis. Catalyzes the decarboxylation of siroheme into didecarboxysiroheme. Siroheme is probably decarboxylated to monodecarboxysiroheme, which is in turn decarboxylated to didecarboxysiroheme. The chain is Siroheme decarboxylase NirH subunit from Paracoccus pantotrophus (Thiosphaera pantotropha).